Here is a 287-residue protein sequence, read N- to C-terminus: PPP2R1A-PPP2R2A-interacting phosphatase regulator 1 (287 aa).

Positions 1–44 (MAQEKMELDLELPPGTGGSPAEGGGSGGGGGLRRSNSAPLIHGL) are disordered. The segment covering 15 to 32 (GTGGSPAEGGGSGGGGGL) has biased composition (gly residues). Position 35 is a phosphoserine (serine 35). Phosphoserine; by CHEK1 is present on serine 37. Position 45 is a phosphoserine (serine 45). Phosphothreonine is present on threonine 47. Phosphoserine is present on residues serine 48, serine 62, and serine 76. Lysine 89 is covalently cross-linked (Glycyl lysine isopeptide (Lys-Gly) (interchain with G-Cter in SUMO1)). Phosphoserine is present on residues serine 143 and serine 147. Threonine 149 is subject to Phosphothreonine. Disordered regions lie at residues 167–189 (SNGL…RSQS) and 236–287 (GVCV…LSSK). 2 stretches are compositionally biased toward low complexity: residues 178 to 189 (PTTRFTTRRSQS) and 246 to 257 (GNSSSAGSSCNS). A phosphoserine mark is found at serine 187 and serine 189. Residues 259–270 (AKVSTTTDSPVS) are compositionally biased toward polar residues. Phosphoserine is present on residues serine 267, serine 270, and serine 276.

Belongs to the FAM122 family. Interacts with PPP2CA and PPP2R1A. Interacts (via its N-terminus) with PPP2R2A; the interaction is direct and this interaction inhibits PP2A activity. The CHEK1-mediated Ser-37 phosphorylated form interacts with 14-3-3 proteins. Post-translationally, CHEK1-mediated phosphorylation at Ser-37 negatively regulates its ability to inhibit serine/threonine-protein phosphatase 2A (PP2A) activity. Phosphorylation leads to its release from the PP2A complex and its sequestration by 14-3-3 proteins in the cytoplasm resulting in its inability to translocate to the nucleus, where it otherwise inhibits PP2A.

It is found in the nucleus. The protein localises to the cytoplasm. Functionally, acts as an inhibitor of serine/threonine-protein phosphatase 2A (PP2A) activity. Inhibits PP2A activity by blocking the substrate binding site on PPP2R2A and the active site of PPP2CA. Potentiates ubiquitin-mediated proteasomal degradation of serine/threonine-protein phosphatase 2A catalytic subunit alpha (PPP2CA). Inhibits PP2A-mediated dephosphorylation of WEE1, promoting ubiquitin-mediated proteolysis of WEE1, thereby releasing G2/M checkpoint. This chain is PPP2R1A-PPP2R2A-interacting phosphatase regulator 1, found in Homo sapiens (Human).